The following is a 363-amino-acid chain: UDP-3-O-acylglucosamine N-acyltransferase (363 aa).

Residue His252 is the Proton acceptor of the active site.

This sequence belongs to the transferase hexapeptide repeat family. LpxD subfamily. In terms of assembly, homotrimer.

It carries out the reaction a UDP-3-O-[(3R)-3-hydroxyacyl]-alpha-D-glucosamine + a (3R)-hydroxyacyl-[ACP] = a UDP-2-N,3-O-bis[(3R)-3-hydroxyacyl]-alpha-D-glucosamine + holo-[ACP] + H(+). Its pathway is bacterial outer membrane biogenesis; LPS lipid A biosynthesis. Its function is as follows. Catalyzes the N-acylation of UDP-3-O-acylglucosamine using 3-hydroxyacyl-ACP as the acyl donor. Is involved in the biosynthesis of lipid A, a phosphorylated glycolipid that anchors the lipopolysaccharide to the outer membrane of the cell. This is UDP-3-O-acylglucosamine N-acyltransferase from Cupriavidus necator (strain ATCC 17699 / DSM 428 / KCTC 22496 / NCIMB 10442 / H16 / Stanier 337) (Ralstonia eutropha).